Here is a 443-residue protein sequence, read N- to C-terminus: Zinc finger protein ZIC 1 (443 aa).

The C2H2-type 1; atypical zinc-finger motif lies at 221 to 256; the sequence is LICKWIEPEQLANPKKSCNKTFSTMHELVTHVTVEH. The C2H2-type 2; atypical zinc finger occupies 265-292; it reads HICVWEECPREGKPFKAKYKLINHIRVH. C2H2-type zinc fingers lie at residues 298 to 322, 328 to 352, and 358 to 380; these read FPCP…KRTH, FKCE…MHVH, and YLCK…MKVH. Residues 371-433 are disordered; the sequence is SSLRKHMKVH…AVHHTSNHST (63 aa). Positions 383-396 are enriched in low complexity; that stretch reads SSQGSQPSPAASSG. Positions 397 to 413 are enriched in polar residues; it reads YESSTPPTIVSPSAENQ. The segment at 408–443 is negatively regulates transcriptional activity; that stretch reads PSAENQSTSSLSPSSSAVHHTSNHSTLSSNFNEWYV. The segment covering 414-433 has biased composition (low complexity); sequence STSSLSPSSSAVHHTSNHST.

This sequence belongs to the GLI C2H2-type zinc-finger protein family. During early gastrula stages, widely expressed in the dorsal ectoderm. At mid-gastrula, expressed throughout the presumptive neural plate and at late gastrula, expression gradually diminishes in the dorsal midline and increases in the anterior folds. By early neurula stage, expression becomes restricted to the lateral edges of the neural plate, corresponding to the presumptive dorsal neural plate and neural crest, and in flanking ectoderm. In early tailbud stages (stages 22-23), expressed in the dorsal forebrain, midbrain and hindbrain. Subsequently expressed in the telencephalon and at the diencephalon/mesencephalon boundary. In the spinal cord, expression is restricted to the dorsal most region including the roof plate. Also expressed in the somites but not in eye vesicles. At larval stages, expressed mainly in the dorsal neural tube throughout its anteroposterior axis.

It is found in the nucleus. Its subcellular location is the cytoplasm. In terms of biological role, transcriptional activator that induces expression of multiple genes including pax3, en2, snai2/slug, feb and a subset of wnt genes. Has multiple key roles in the regulation of neural induction and neurogenesis: acts as a neural competence factor, sensitizing the presumptive neuroectoderm to respond to subsequent neuralizing signals. Promotes both preplacodal cell fates and neural crest cell fates, two of the cell populations that arise from the neural plate border. Cooperates with pax3 in concert with wnt signaling to determine neural crest fate. Synergizes with the bmp-inhibitor noggin/nog and acts through the wnt pathway to induce expression of en2. May bind to the minimal GLI-consensus sequence 5'-TGGGTGGTC-3'. The chain is Zinc finger protein ZIC 1 (zic1) from Xenopus laevis (African clawed frog).